Reading from the N-terminus, the 328-residue chain is PLASTID TRANSCRIPTIONALLY ACTIVE protein 6, chloroplastic (328 aa).

The segment covering 1–14 (MASSAASPSLSLLS) has biased composition (low complexity). The interval 1–21 (MASSAASPSLSLLSFTSKPPY) is disordered. The N-terminal 59 residues, 1–59 (MASSAASPSLSLLSFTSKPPYPSGSQRLFASFRTDGLFAPLTLKSRRGRGIVVKVDDVD), are a transit peptide targeting the chloroplast. The short motif at 267–275 (RKRDRKDDL) is the Nuclear localization signal element. Positions 301-319 (EREEWTKTREDMEKHLRKL) match the RNA binding domain motif.

Subunit of the plastid-encoded RNA polymerase (PEP) complex. Component of a large nuclear subcomplex that may include other PEP subunits (e.g. PTAC12/HMR/PAP5, PTAC14/PAP7 and PTAC7/PAP12). Binds directly to PTAC12/HMR/PAP5 in the nucleus. Interacts with MTERF5. Mostly expressed in rosette leaves, stems and flowers, and, to a lower extent, in roots and cauline leaves.

The protein localises to the plastid. The protein resides in the chloroplast. Its subcellular location is the chloroplast thylakoid. It localises to the nucleus. It is found in the nucleoplasm. Essential protein involved in plastid gene expression and in chloroplast biogenesis. Links photomorphogenesis and chloroplast biogenesis through its dual localization; required for the formation of late photobodies in the nucleus, as well as for phytochrome B-mediated signaling cascade and subsequent reshaping of the plastid-encoded RNA polymerase (PEP) activity. Binds RNA via specific recognition motifs of viral origin. Recruited by MTERF5 to the transcriptionally paused region of psbEFLJ. Promotes leaf greening. This is PLASTID TRANSCRIPTIONALLY ACTIVE protein 6, chloroplastic from Arabidopsis thaliana (Mouse-ear cress).